The sequence spans 122 residues: Large ribosomal subunit protein uL14 (122 aa).

It belongs to the universal ribosomal protein uL14 family. As to quaternary structure, part of the 50S ribosomal subunit. Forms a cluster with proteins L3 and L19. In the 70S ribosome, L14 and L19 interact and together make contacts with the 16S rRNA in bridges B5 and B8.

In terms of biological role, binds to 23S rRNA. Forms part of two intersubunit bridges in the 70S ribosome. The chain is Large ribosomal subunit protein uL14 from Lawsonia intracellularis (strain PHE/MN1-00).